Here is a 494-residue protein sequence, read N- to C-terminus: Anaerobic nitric oxide reductase flavorubredoxin (494 aa).

Positions Thr-30 to Ile-210 are zinc metallo-hydrolase. 6 residues coordinate Fe cation: His-79, Glu-81, Asp-83, His-147, Asp-166, and His-227. A Flavodoxin-like domain is found at Ile-254 to Ala-393. FMN-binding positions include Ser-260–Asn-264 and Ala-342–Ile-369. Positions Cys-441–Tyr-492 constitute a Rubredoxin-like domain. Fe cation-binding residues include Cys-446, Cys-449, Cys-479, and Cys-482.

It in the N-terminal section; belongs to the zinc metallo-hydrolase group 3 family. Homotetramer. The cofactor is Fe cation. Requires FMN as cofactor.

The protein resides in the cytoplasm. It functions in the pathway nitrogen metabolism; nitric oxide reduction. In terms of biological role, anaerobic nitric oxide reductase; uses NADH to detoxify nitric oxide (NO), protecting several 4Fe-4S NO-sensitive enzymes. Has at least 2 reductase partners, only one of which (NorW, flavorubredoxin reductase) has been identified. NO probably binds to the di-iron center; electrons enter from the NorW at rubredoxin and are transferred sequentially to the FMN center and the di-iron center. Also able to function as an aerobic oxygen reductase. The polypeptide is Anaerobic nitric oxide reductase flavorubredoxin (Vibrio vulnificus (strain YJ016)).